The primary structure comprises 486 residues: Malonate-semialdehyde dehydrogenase (486 aa).

Residues F154, K178, E181, R182, and S231 each coordinate NAD(+). Catalysis depends on C286, which acts as the Nucleophile. E386 is a binding site for NAD(+).

Belongs to the aldehyde dehydrogenase family. IolA subfamily. Homotetramer.

The enzyme catalyses 3-oxopropanoate + NAD(+) + CoA + H2O = hydrogencarbonate + acetyl-CoA + NADH + H(+). It carries out the reaction 2-methyl-3-oxopropanoate + NAD(+) + CoA + H2O = propanoyl-CoA + hydrogencarbonate + NADH + H(+). The protein operates within polyol metabolism; myo-inositol degradation into acetyl-CoA; acetyl-CoA from myo-inositol: step 7/7. Catalyzes the oxidation of malonate semialdehyde (MSA) and methylmalonate semialdehyde (MMSA) into acetyl-CoA and propanoyl-CoA, respectively. Is involved in a myo-inositol catabolic pathway. Bicarbonate, and not CO2, is the end-product of the enzymatic reaction. This chain is Malonate-semialdehyde dehydrogenase, found in Bacillus cereus (strain G9842).